The chain runs to 252 residues: C-type lectin domain family 2 member D3 (252 aa).

The tract at residues 1–58 (MSSSAHLQDAPPLLSGTLTQNEGQTSLRQSSSCGPSAASASESLSGYTESRIPHSKVR) is disordered. At 1–78 (MSSSAHLQDA…ESRVKRYCCY (78 aa)) the chain is on the cytoplasmic side. The segment covering 16 to 29 (GTLTQNEGQTSLRQ) has biased composition (polar residues). Residues 30–43 (SSSCGPSAASASES) are compositionally biased toward low complexity. Residues 79–99 (GGVITVVAIAIVVPLSVTLSV) traverse the membrane as a helical; Signal-anchor for type II membrane protein segment. The Extracellular segment spans residues 100 to 252 (KQMEQTSINN…KPKKYISQSQ (153 aa)). A C-type lectin domain is found at 137 to 242 (YGNKCFYFSE…VYVERPWICS (106 aa)). N-linked (GlcNAc...) asparagine glycosylation occurs at Asn150. A disulfide bond links Cys158 and Cys241.

It is found in the cell membrane. Lectin-type cell surface receptor. This is C-type lectin domain family 2 member D3 (Clec2d3) from Rattus norvegicus (Rat).